The sequence spans 375 residues: Queuine tRNA-ribosyltransferase (375 aa).

Asp89 acts as the Proton acceptor in catalysis. Substrate contacts are provided by residues 89–93 (DSGGF), Asp143, Gln187, and Gly214. The segment at 245–251 (GVGKPED) is RNA binding. Asp264 acts as the Nucleophile in catalysis. The segment at 269 to 273 (TRNAR) is RNA binding; important for wobble base 34 recognition. Residues Cys302, Cys304, Cys307, and His333 each contribute to the Zn(2+) site.

This sequence belongs to the queuine tRNA-ribosyltransferase family. As to quaternary structure, homodimer. Within each dimer, one monomer is responsible for RNA recognition and catalysis, while the other monomer binds to the replacement base PreQ1. Zn(2+) is required as a cofactor.

The enzyme catalyses 7-aminomethyl-7-carbaguanine + guanosine(34) in tRNA = 7-aminomethyl-7-carbaguanosine(34) in tRNA + guanine. It functions in the pathway tRNA modification; tRNA-queuosine biosynthesis. Functionally, catalyzes the base-exchange of a guanine (G) residue with the queuine precursor 7-aminomethyl-7-deazaguanine (PreQ1) at position 34 (anticodon wobble position) in tRNAs with GU(N) anticodons (tRNA-Asp, -Asn, -His and -Tyr). Catalysis occurs through a double-displacement mechanism. The nucleophile active site attacks the C1' of nucleotide 34 to detach the guanine base from the RNA, forming a covalent enzyme-RNA intermediate. The proton acceptor active site deprotonates the incoming PreQ1, allowing a nucleophilic attack on the C1' of the ribose to form the product. After dissociation, two additional enzymatic reactions on the tRNA convert PreQ1 to queuine (Q), resulting in the hypermodified nucleoside queuosine (7-(((4,5-cis-dihydroxy-2-cyclopenten-1-yl)amino)methyl)-7-deazaguanosine). This chain is Queuine tRNA-ribosyltransferase, found in Shigella flexneri serotype 5b (strain 8401).